Here is a 218-residue protein sequence, read N- to C-terminus: MRLRNKPWAVKLVNDHPESVLQNPNPDEKIYWEKRFGNDHPIEIEVGSGKGHFITTLAEQHPEKNFVALELQTTAAGIILRTKLKKGLDNLQILRGDAADINCFFDKNTTDVIYLNFSDPWPKSRHEKRRLTYKSFLNKYQQVLKPEGHIEFKTDNSGLFAYSVQSMNNYGMFFDFVSVDLHHEKPEIVEKNIETEYEHKFAAKGNPIYALHAHFETK.

S-adenosyl-L-methionine-binding residues include Glu-45, Glu-70, Asp-97, and Asp-119. The active site involves Asp-119. Residue Lys-123 coordinates substrate. The interaction with RNA stretch occupies residues 125–130 (RHEKRR). Substrate contacts are provided by residues Asp-155 and 195 to 198 (TEYE).

Belongs to the class I-like SAM-binding methyltransferase superfamily. TrmB family.

It carries out the reaction guanosine(46) in tRNA + S-adenosyl-L-methionine = N(7)-methylguanosine(46) in tRNA + S-adenosyl-L-homocysteine. It participates in tRNA modification; N(7)-methylguanine-tRNA biosynthesis. Catalyzes the formation of N(7)-methylguanine at position 46 (m7G46) in tRNA. In Lactobacillus acidophilus (strain ATCC 700396 / NCK56 / N2 / NCFM), this protein is tRNA (guanine-N(7)-)-methyltransferase.